A 341-amino-acid polypeptide reads, in one-letter code: Paired box protein Pax-9 (341 aa).

A DNA-binding region (paired) is located at residues 4–130; that stretch reads AFGEVNQLGG…SSISRILRNK (127 aa). Residues 7–63 are PAI subdomain; sequence EVNQLGGVFVNGRPLPNAIRLRIVELAQLGIRPCDISRQLRVSHGCVSKILARYNET. Residues 82-130 form an RED subdomain region; sequence TVVKHIRTYKQRDPGIFAWEIRDRLLADGVCDKYNVPSVSSISRILRNK. Residues 168-189 are interaction with KDM5B; sequence AAAAKVPTPPGVPAIPGSVAMP.

Interacts with KDM5B.

The protein localises to the nucleus. In terms of biological role, transcription factor required for normal development of thymus, parathyroid glands, ultimobranchial bodies, teeth, skeletal elements of skull and larynx as well as distal limbs. In Callithrix jacchus (White-tufted-ear marmoset), this protein is Paired box protein Pax-9 (PAX9).